Here is a 136-residue protein sequence, read N- to C-terminus: Large ribosomal subunit protein bL17 (136 aa).

This sequence belongs to the bacterial ribosomal protein bL17 family. Part of the 50S ribosomal subunit. Contacts protein L32.

This is Large ribosomal subunit protein bL17 from Rhodopseudomonas palustris (strain BisB5).